The chain runs to 158 residues: Cyclic pyranopterin monophosphate synthase (158 aa).

Residues 75 to 77 (LCH) and 113 to 114 (ME) each bind substrate. The active site involves Asp-128.

Belongs to the MoaC family. In terms of assembly, homohexamer; trimer of dimers.

The enzyme catalyses (8S)-3',8-cyclo-7,8-dihydroguanosine 5'-triphosphate = cyclic pyranopterin phosphate + diphosphate. It participates in cofactor biosynthesis; molybdopterin biosynthesis. In terms of biological role, catalyzes the conversion of (8S)-3',8-cyclo-7,8-dihydroguanosine 5'-triphosphate to cyclic pyranopterin monophosphate (cPMP). This is Cyclic pyranopterin monophosphate synthase from Roseiflexus sp. (strain RS-1).